We begin with the raw amino-acid sequence, 295 residues long: G1/S-specific cyclin-D1 (295 aa).

Residues 28 to 152 enclose the Cyclin N-terminal domain; the sequence is LRAMLKAEET…LLVNKLKWNL (125 aa). Residues 262 to 295 form a disordered region; sequence AQQNMDPKAAEEEEEEEEEVDLACTPTDVRDVDI. A Glycyl lysine isopeptide (Lys-Gly) (interchain with G-Cter in ubiquitin) cross-link involves residue lysine 269. The span at 272–282 shows a compositional bias: acidic residues; sequence EEEEEEEEEVD. Threonine 286 carries the post-translational modification Phosphothreonine.

It belongs to the cyclin family. Cyclin D subfamily. In terms of assembly, interacts with either CDK4 or CDK6 protein kinase to form a serine/threonine kinase holoenzyme complex. The cyclin subunit imparts substrate specificity to the complex. Component of the ternary complex CCND1/CDK4/CDKN1B required for nuclear translocation and modulation of CDK4-mediated kinase activity. Interacts directly with CDKN1B. Can form similar complexes with either CDKN1A or CDKN2A. Interacts with UHRF2; the interaction ubiquitinates CCND1 and appears to occur independently of phosphorylation. Interacts with USP2. Interacts (via cyclin N-terminal domain) with INSM1 (via N-terminal region); the interaction competes with the binding of CCND1 to CDK4 during cell cycle progression and inhibits CDK4 activity. Interacts with CDK4; the interaction is prevented with the binding of CCND1 to INSM1 during cell cycle progression. Post-translationally, phosphorylation at Thr-286 by MAP kinases is required for ubiquitination and degradation by the DCX(AMBRA1) complex. It also plays an essential role for recognition by the FBXO31 component of SCF (SKP1-cullin-F-box) protein ligase complex following DNA damage. In terms of processing, ubiquitinated at Lys-269 by the DCX(AMBRA1) complex during the transition from G1 to S cell phase, leading to its degradation: ubiquitination is dependent on Thr-286 phosphorylation. The DCX(AMBRA1) complex represents the major regulator of CCND1 stability during the G1/S transition. Also ubiquitinated by the SCF(FBXO4) and Cul7-RING(FBXW8) ubiquitin-protein ligase complexes. Following DNA damage it is ubiquitinated by the SCF(FBXO31) protein ligase complex. SCF(FBXO31) ubiquitination is dependent on Thr-286 phosphorylation. Ubiquitinated also by UHRF2 apparently in a phosphorylation-independent manner. Ubiquitination leads to its degradation and G1 arrest. Deubiquitinated by USP2; leading to its stabilization.

The protein localises to the nucleus. It localises to the cytoplasm. It is found in the nucleus membrane. Functionally, regulatory component of the cyclin D1-CDK4 (DC) complex that phosphorylates and inhibits members of the retinoblastoma (RB) protein family including RB1 and regulates the cell-cycle during G(1)/S transition. Phosphorylation of RB1 allows dissociation of the transcription factor E2F from the RB/E2F complex and the subsequent transcription of E2F target genes which are responsible for the progression through the G(1) phase. Hypophosphorylates RB1 in early G(1) phase. Cyclin D-CDK4 complexes are major integrators of various mitogenenic and antimitogenic signals. Also a substrate for SMAD3, phosphorylating SMAD3 in a cell-cycle-dependent manner and repressing its transcriptional activity. Component of the ternary complex, cyclin D1/CDK4/CDKN1B, required for nuclear translocation and activity of the cyclin D-CDK4 complex. Exhibits transcriptional corepressor activity with INSM1 on the NEUROD1 and INS promoters in a cell cycle-independent manner. This is G1/S-specific cyclin-D1 from Homo sapiens (Human).